The following is a 389-amino-acid chain: tRNA-specific 2-thiouridylase MnmA (389 aa).

ATP contacts are provided by residues 33–40 (GLSGGVDS) and Leu-59. Cys-120 functions as the Nucleophile in the catalytic mechanism. A disulfide bridge links Cys-120 with Cys-219. Residue Gly-145 coordinates ATP. The interaction with tRNA stretch occupies residues 169–171 (KDQ). Cys-219 (cysteine persulfide intermediate) is an active-site residue. Residues 326 to 327 (RY) form an interaction with tRNA region.

It belongs to the MnmA/TRMU family.

The protein localises to the cytoplasm. It carries out the reaction S-sulfanyl-L-cysteinyl-[protein] + uridine(34) in tRNA + AH2 + ATP = 2-thiouridine(34) in tRNA + L-cysteinyl-[protein] + A + AMP + diphosphate + H(+). Functionally, catalyzes the 2-thiolation of uridine at the wobble position (U34) of tRNA, leading to the formation of s(2)U34. The chain is tRNA-specific 2-thiouridylase MnmA from Synechococcus sp. (strain WH7803).